The primary structure comprises 522 residues: 2-isopropylmalate synthase (522 aa).

The 263-residue stretch at 5–267 (VIIFDTTLRD…ETGINAKEIH (263 aa)) folds into the Pyruvate carboxyltransferase domain. The Mn(2+) site is built by Asp14, His202, His204, and Asn238. The regulatory domain stretch occupies residues 392–522 (QLQQLVVQSD…MQKNRELGGV (131 aa)).

The protein belongs to the alpha-IPM synthase/homocitrate synthase family. LeuA type 1 subfamily. As to quaternary structure, homodimer. Mn(2+) serves as cofactor.

It localises to the cytoplasm. The enzyme catalyses 3-methyl-2-oxobutanoate + acetyl-CoA + H2O = (2S)-2-isopropylmalate + CoA + H(+). It functions in the pathway amino-acid biosynthesis; L-leucine biosynthesis; L-leucine from 3-methyl-2-oxobutanoate: step 1/4. In terms of biological role, catalyzes the condensation of the acetyl group of acetyl-CoA with 3-methyl-2-oxobutanoate (2-ketoisovalerate) to form 3-carboxy-3-hydroxy-4-methylpentanoate (2-isopropylmalate). This Shewanella putrefaciens (strain CN-32 / ATCC BAA-453) protein is 2-isopropylmalate synthase.